We begin with the raw amino-acid sequence, 95 residues long: Cell division topological specificity factor (95 aa).

Belongs to the MinE family.

Its function is as follows. Prevents the cell division inhibition by proteins MinC and MinD at internal division sites while permitting inhibition at polar sites. This ensures cell division at the proper site by restricting the formation of a division septum at the midpoint of the long axis of the cell. In Methylorubrum extorquens (strain CM4 / NCIMB 13688) (Methylobacterium extorquens), this protein is Cell division topological specificity factor.